Consider the following 359-residue polypeptide: UPF0283 membrane protein RHECIAT_CH0002430 (359 aa).

Residues 1-50 are disordered; that stretch reads MSKPPSDPPRRPPAAFAYEDEASEPRNSGRQQQGRRKPESFSENIVVTPD. The next 2 membrane-spanning stretches (helical) occupy residues 77–97 and 111–131; these read FGKIAAGAFGILLSLGLGLWT and LGYAALGVLAIGILAVLALVI.

It belongs to the UPF0283 family.

It is found in the cell inner membrane. This is UPF0283 membrane protein RHECIAT_CH0002430 from Rhizobium etli (strain CIAT 652).